Consider the following 493-residue polypeptide: Sorting nexin-4 (493 aa).

Positions 1 to 77 are disordered; the sequence is MAVIDQDNFS…ILDCTVSDPH (77 aa). A compositionally biased stretch (polar residues) spans 7–28; that stretch reads DNFSNISWHSEQNAESAASTAQ. Positions 56 to 65 are enriched in basic and acidic residues; the sequence is MEHDELDHSG. Residues 68 to 190 enclose the PX domain; it reads ILDCTVSDPH…AFLESPDWNA (123 aa). 4 residues coordinate a 1,2-diacyl-sn-glycero-3-phospho-(1D-myo-inositol-3-phosphate): Arg-111, Thr-113, Lys-137, and Arg-156. 3 coiled-coil regions span residues 248-292, 338-363, and 405-442; these read EIKE…QKLI, SGTL…EYLN, and EQAR…QVSR.

Belongs to the sorting nexin family.

It is found in the cytoplasm. Its subcellular location is the membrane. The protein resides in the endosome membrane. Sorting nexin, involved in the separation or division of vacuoles throughout the entire life cycle of the cells. Involved in retrieval of late-Golgi SNAREs from post-Golgi endosomes to the trans-Golgi network, for cytoplasm to vacuole transport (Cvt), and autophagy of large cargos including mitophagy, pexophagy and glycophagy. This Neurospora crassa (strain ATCC 24698 / 74-OR23-1A / CBS 708.71 / DSM 1257 / FGSC 987) protein is Sorting nexin-4 (vsp-5).